A 145-amino-acid chain; its full sequence is 3-dehydroquinate dehydratase (145 aa).

Y23 (proton acceptor) is an active-site residue. Substrate-binding residues include N73, H79, and D86. The active-site Proton donor is H99. Residues 100–101 (LS) and R110 contribute to the substrate site.

This sequence belongs to the type-II 3-dehydroquinase family. Homododecamer.

It carries out the reaction 3-dehydroquinate = 3-dehydroshikimate + H2O. Its pathway is metabolic intermediate biosynthesis; chorismate biosynthesis; chorismate from D-erythrose 4-phosphate and phosphoenolpyruvate: step 3/7. Its function is as follows. Catalyzes a trans-dehydration via an enolate intermediate. This is 3-dehydroquinate dehydratase from Desulfitobacterium hafniense (strain DSM 10664 / DCB-2).